Consider the following 547-residue polypeptide: Chaperonin GroEL (547 aa).

ATP is bound by residues 30–33 (TLGP), Lys-51, 87–91 (DGTTT), Gly-415, and Asp-496.

This sequence belongs to the chaperonin (HSP60) family. As to quaternary structure, forms a cylinder of 14 subunits composed of two heptameric rings stacked back-to-back. Interacts with the co-chaperonin GroES.

Its subcellular location is the cytoplasm. It catalyses the reaction ATP + H2O + a folded polypeptide = ADP + phosphate + an unfolded polypeptide.. Functionally, together with its co-chaperonin GroES, plays an essential role in assisting protein folding. The GroEL-GroES system forms a nano-cage that allows encapsulation of the non-native substrate proteins and provides a physical environment optimized to promote and accelerate protein folding. In Actinobacillus pleuropneumoniae serotype 5b (strain L20), this protein is Chaperonin GroEL.